We begin with the raw amino-acid sequence, 548 residues long: Chaperonin GroEL (548 aa).

Residues 29–32 (TMGP), K50, 86–90 (DGTTT), G414, 478–480 (NAA), and D494 each bind ATP.

The protein belongs to the chaperonin (HSP60) family. As to quaternary structure, forms a cylinder of 14 subunits composed of two heptameric rings stacked back-to-back. Interacts with the co-chaperonin GroES.

The protein resides in the cytoplasm. It carries out the reaction ATP + H2O + a folded polypeptide = ADP + phosphate + an unfolded polypeptide.. Its function is as follows. Together with its co-chaperonin GroES, plays an essential role in assisting protein folding. The GroEL-GroES system forms a nano-cage that allows encapsulation of the non-native substrate proteins and provides a physical environment optimized to promote and accelerate protein folding. In Legionella pneumophila (strain Corby), this protein is Chaperonin GroEL.